The chain runs to 189 residues: dCTP deaminase (189 aa).

DCTP contacts are provided by residues 112 to 117 (KSTYAR), 136 to 138 (TLE), Q157, Y171, and Q181. E138 serves as the catalytic Proton donor/acceptor.

This sequence belongs to the dCTP deaminase family. As to quaternary structure, homotrimer.

The catalysed reaction is dCTP + H2O + H(+) = dUTP + NH4(+). It functions in the pathway pyrimidine metabolism; dUMP biosynthesis; dUMP from dCTP (dUTP route): step 1/2. Functionally, catalyzes the deamination of dCTP to dUTP. This Methylacidiphilum infernorum (isolate V4) (Methylokorus infernorum (strain V4)) protein is dCTP deaminase.